Reading from the N-terminus, the 396-residue chain is MSVRLVLAKGREKSLLRRHPWVFSGAVARMEGKASLGETIDIVDHQGKWLARGAYSPASQIRARVWTFDPSESIDIAFFSRRLQQAQKWRDWLAQKDGLDSYRLIAGESDGLPGITIDRFGNFLVLQLLSAGAEYQRAALITALQTLYPECAIYDRSDVAVRKKEGMELTHGLLTGELPPALLPIEEHGMNLLVDIHHGHKTAYYLDQRDSRLATRRYVENKRVLNCFSYTGGFAVSALMGGCSQVVSVDTSQEALDIARQNVELNKLDLSKAEFVRDDVFKLLRTYRDRGEKFDVIVMDPPKFVENKSQLMGACRGYKDINMLAIQLLNEGGILLTFSCSGLMTSDLFQKIIADAAIDAGRDVQFIEQFRQAADHPVIATYPEGLYLKGFACRVM.

The PUA domain occupies 2–81; the sequence is SVRLVLAKGR…ESIDIAFFSR (80 aa).

The protein belongs to the methyltransferase superfamily. RlmI family.

Its subcellular location is the cytoplasm. It catalyses the reaction cytidine(1962) in 23S rRNA + S-adenosyl-L-methionine = 5-methylcytidine(1962) in 23S rRNA + S-adenosyl-L-homocysteine + H(+). In terms of biological role, specifically methylates the cytosine at position 1962 (m5C1962) of 23S rRNA. This is Ribosomal RNA large subunit methyltransferase I from Shigella flexneri.